The chain runs to 273 residues: ATP synthase subunit a (273 aa).

7 helical membrane passes run 34–54, 94–114, 115–135, 143–163, 171–191, 218–238, and 244–264; these read IINMDTIFWSIFAGVVGCLFM, FIAPLALTVFVWVALMNSLDF, LPVDMFSAFFHAVGLDSLITH, DLNGTMGIALGVFALMIFYNI, FVHELFAAPFGIWLAPFNLLL, FLLIALLGSTATAFGFFGHVV, and AIFHILIVFLQAFIFMMLTLV.

It belongs to the ATPase A chain family. As to quaternary structure, F-type ATPases have 2 components, CF(1) - the catalytic core - and CF(0) - the membrane proton channel. CF(1) has five subunits: alpha(3), beta(3), gamma(1), delta(1), epsilon(1). CF(0) has three main subunits: a(1), b(2) and c(9-12). The alpha and beta chains form an alternating ring which encloses part of the gamma chain. CF(1) is attached to CF(0) by a central stalk formed by the gamma and epsilon chains, while a peripheral stalk is formed by the delta and b chains.

It is found in the cell inner membrane. Its function is as follows. Key component of the proton channel; it plays a direct role in the translocation of protons across the membrane. The chain is ATP synthase subunit a from Janthinobacterium sp. (strain Marseille) (Minibacterium massiliensis).